The chain runs to 30 residues: Hemocyanin subunit 2 (30 aa).

Belongs to the tyrosinase family. Hemocyanin subfamily. As to expression, hemolymph.

It is found in the secreted. Its subcellular location is the extracellular space. In terms of biological role, hemocyanins are copper-containing oxygen carriers occurring freely dissolved in the hemolymph of many mollusks and arthropods. The chain is Hemocyanin subunit 2 from Homarus americanus (American lobster).